Reading from the N-terminus, the 344-residue chain is MAGSEEVNLIESKTVVPLNTWVLISNFKLAYNLLRRPDGTFNRHLAEFLDRKVPANANPVNGVFSFDVIIDRQTNLLSRVYRPADAGTSPSITDLQNPVDGEIVPVIVFFHGGSFAHSSANSAIYDTLCRRLVGLCGAVVVSVNYRRAPENRYPCAYDDGWAVLKWVNSSSWLRSKKDSKVRIFLAGDSSGGNIVHNVAVRAVESRIDVLGNILLNPMFGGTERTESEKRLDGKYFVTVRDRDWYWRAFLPEGEDREHPACSPFGPRSKSLEGLSFPKSLVVVAGLDLIQDWQLKYAEGLKKAGQEVKLLYLEQATIGFYLLPNNNHFHTVMDEIAAFVNAECQ.

At Ala-2 the chain carries N-acetylalanine. The short motif at 111-113 is the Involved in the stabilization of the negatively charged intermediate by the formation of the oxyanion hole element; the sequence is HGG. Gibberellin A4-binding positions include 113 to 114, Tyr-125, and Ser-189; that span reads GS. Gibberellin A3 is bound by residues Ser-114, Tyr-125, Ser-189, and Phe-236. Residue Ser-189 is part of the active site. The active site involves Asp-287. A gibberellin A4-binding site is contributed by Gly-318. Gly-318 lines the gibberellin A3 pocket.

Belongs to the 'GDXG' lipolytic enzyme family. As to quaternary structure, interacts with the DELLA proteins GAI, RGA, RGL1, RGL2 and RGL3 in a GA-dependent manner. As to expression, widely expressed.

The protein resides in the nucleus. Functions as a soluble gibberellin (GA) receptor. GA is an essential hormone that regulates growth and development in plants. Binds with high affinity the biologically active gibberellin GA4, but has no affinity for the biologically inactive GAs. In response to GA, interacts with specific DELLA proteins, known as repressors of GA-induced growth, and targets them for degradation via proteasome. Seems to be required for GA signaling that controls root growth, seed germination and stem elongation. Partially redundant with GID1A and GID1B. This is Gibberellin receptor GID1C (GID1C) from Arabidopsis thaliana (Mouse-ear cress).